Reading from the N-terminus, the 293-residue chain is Large ribosomal RNA subunit accumulation protein YCED homolog 1, chloroplastic (293 aa).

Residues 1–42 (MYYPQPTVSLAAAVALLRPSLRRHSQRASSLLRSSTPPPWVS) constitute a chloroplast transit peptide.

Belongs to the DUF177 domain family. In terms of tissue distribution, highly expressed in shoots and leaves. Detected in roots, embryos and endosperm.

Its subcellular location is the plastid. The protein localises to the chloroplast. In terms of biological role, plays a role in synthesis, processing and/or stability of 23S rRNA. Required for embryogenesis. May be involved in RPL23 transcript levels regulation in non-photosynthetic plastids. In Zea mays (Maize), this protein is Large ribosomal RNA subunit accumulation protein YCED homolog 1, chloroplastic.